The following is a 919-amino-acid chain: Valine--tRNA ligase (919 aa).

The 'HIGH' region motif lies at 46 to 56 (PNVTGTLHMGH). The 'KMSKS' region motif lies at 528-532 (KMSKS). Residue K531 participates in ATP binding. Positions 849-919 (LAGLVDIEAE…KTLEKKEALG (71 aa)) form a coiled coil.

Belongs to the class-I aminoacyl-tRNA synthetase family. ValS type 1 subfamily. In terms of assembly, monomer.

The protein resides in the cytoplasm. It catalyses the reaction tRNA(Val) + L-valine + ATP = L-valyl-tRNA(Val) + AMP + diphosphate. Its function is as follows. Catalyzes the attachment of valine to tRNA(Val). As ValRS can inadvertently accommodate and process structurally similar amino acids such as threonine, to avoid such errors, it has a 'posttransfer' editing activity that hydrolyzes mischarged Thr-tRNA(Val) in a tRNA-dependent manner. This is Valine--tRNA ligase from Francisella tularensis subsp. tularensis (strain SCHU S4 / Schu 4).